A 371-amino-acid chain; its full sequence is Protein MxiG (371 aa).

A helical transmembrane segment spans residues 127–141; the sequence is VFFFFAVIVVLIIIF.

Its subcellular location is the cell inner membrane. It is found in the cell outer membrane. Functionally, involved in the secretion of the Ipa antigens. Involved in the intracellular dissemination of Shigella. Part of the Mxi-Spa secretion apparatus. This chain is Protein MxiG (mxiG), found in Shigella flexneri.